Reading from the N-terminus, the 88-residue chain is Small ribosomal subunit protein bS16c (88 aa).

Belongs to the bacterial ribosomal protein bS16 family.

The protein localises to the plastid. The protein resides in the chloroplast. In Calycanthus floridus var. glaucus (Eastern sweetshrub), this protein is Small ribosomal subunit protein bS16c.